A 340-amino-acid polypeptide reads, in one-letter code: Phosphoribosylformylglycinamidine cyclo-ligase (340 aa).

This sequence belongs to the AIR synthase family.

The protein localises to the cytoplasm. It carries out the reaction 2-formamido-N(1)-(5-O-phospho-beta-D-ribosyl)acetamidine + ATP = 5-amino-1-(5-phospho-beta-D-ribosyl)imidazole + ADP + phosphate + H(+). The protein operates within purine metabolism; IMP biosynthesis via de novo pathway; 5-amino-1-(5-phospho-D-ribosyl)imidazole from N(2)-formyl-N(1)-(5-phospho-D-ribosyl)glycinamide: step 2/2. This Streptococcus agalactiae serotype III (strain NEM316) protein is Phosphoribosylformylglycinamidine cyclo-ligase.